Reading from the N-terminus, the 96-residue chain is Conantokin Rl-B (96 aa).

The N-terminal stretch at 1-21 is a signal peptide; that stretch reads MQLYTYLYLLVPLVTFHLILG. The propeptide occupies 22–78; that stretch reads TGTLDHGDALTERRSTDATALKPEPVLLQKSSARSTNDNGKDTQMKRILKKRGNKAR. Positions 51–96 are disordered; sequence KSSARSTNDNGKDTQMKRILKKRGNKARGEEELAEKAPEFARELAN. Residues 77 to 96 are compositionally biased toward basic and acidic residues; the sequence is ARGEEELAEKAPEFARELAN. Glu-81 lines the a divalent metal cation pocket. Residues Glu-81, Glu-82, and Glu-85 each carry the 4-carboxyglutamate modification. Glu-85 is an a divalent metal cation binding site. Position 88 is a 4-hydroxyproline (Pro-88). Residues Glu-89 and Glu-93 each coordinate a divalent metal cation. Glu-89 and Glu-93 each carry 4-carboxyglutamate. Asn-96 is modified (asparagine amide).

The protein belongs to the conotoxin B superfamily. It depends on Ca(2+) as a cofactor. Mg(2+) serves as cofactor. Hydroxylation of Pro-88 is important for NR2B/GRIN2B NMDA receptor selectivity. Removal of hydroxylation does not change global NMDA receptor antagonism (tested on WT neurons), but it decreases the inhibitory potency on NR2B/GRIN2B NMDA receptors and increases the inhibitory potency on NR2A/GRIN2A NMDA receptors. Hydroxylation of Pro-88 locally disrupts a small region of the divalent cation-induced alpha-helix but does not destabilize the entire helix. As to expression, expressed by the venom duct.

It localises to the secreted. Its function is as follows. Conantokins inhibit N-methyl-D-aspartate (NMDA) receptors. This toxin has antagonist activity on the NR2B/GRIN2B subunit (IC(50)=0.1 uM). In vivo, when delivered into the brain, is active has anticonvulsant activity in the model of epilepsy in mice. This chain is Conantokin Rl-B, found in Conus rolani (Cone snail).